The sequence spans 420 residues: Glycogen synthase kinase-3 beta (420 aa).

Polar residues predominate over residues Met-1 to Ala-22. Residues Met-1–Ser-35 are disordered. Ser-9 carries the phosphoserine; by PKB/AKT1, RPS6KA3 and SGK3 modification. A lipid anchor (S-palmitoyl cysteine) is attached at Cys-14. The region spanning Tyr-56–Phe-340 is the Protein kinase domain. ATP-binding positions include Ile-62–Val-70 and Lys-85. Asp-181 functions as the Proton acceptor in the catalytic mechanism. Tyr-216 bears the Phosphotyrosine mark. Low complexity-rich tracts occupy residues Ala-387 to Asn-401 and Asn-409 to Thr-420. A disordered region spans residues Ala-387 to Thr-420. Ser-389 carries the post-translational modification Phosphoserine. Thr-390 carries the post-translational modification Phosphothreonine.

This sequence belongs to the protein kinase superfamily. CMGC Ser/Thr protein kinase family. GSK-3 subfamily. In terms of assembly, monomer. Interacts with DAB2IP (via C2 domain); the interaction stimulates GSK3B kinase activation. Interacts (via C2 domain) with PPP2CA. Interacts with ARRB2, AXIN1, CABYR, DISC1, MMP2, MUC1, NIN, PRUNE1 and ZBED3. Interacts with AXIN1; the interaction mediates hyperphosphorylation of CTNNB1 leading to its ubiquitination and destruction. Interacts with and phosphorylates SNAI1. Interacts with DNM1L (via a C-terminal domain). Found in a complex composed of MACF1, APC, AXIN1, CTNNB1 and GSK3B. Interacts with SGK3. Interacts with the CLOCK-BMAL1 heterodimer. Interacts with the BMAL1. Interacts with CTNND2. The complex composed, at least, of APC, CTNNB1 and GSK3B interacts with JPT1; the interaction requires the inactive form of GSK3B (phosphorylated at 'Ser-9'). Forms a complex composed of PRKAR2A or PRKAR2B, GSK3B and GSKIP through GSKIP interaction; facilitates PKA-induced phosphorylation and regulates GSK3B activity. Interacts with GSKIP. Interacts with GID8. Interacts with PIWIL2. Interacts with LMBR1L. Interacts with DDX3X. Interacts with BIRC2. Interacts with TNFRSF10B; TNFRSF10B stimulation inhibits GSK3B kinase activity. Found in a complex with SLC39A6, SLC39A10 and with GSK3B that controls NCAM1 phosphorylation. Interacts with PKP3 (via ARM repeats); the interaction may be involved in PKP3 protein degradation. In terms of processing, phosphorylated by AKT1 and ILK1. Upon insulin-mediated signaling, the activated PKB/AKT1 and RPS6KA3 protein kinases phosphorylate and deactivate GSK3B, resulting in the dephosphorylation and activation of GYS1. Activated by phosphorylation at Tyr-216. Inactivated by phosphorylation at Ser-9. Post-translationally, mono-ADP-ribosylation by PARP10 negatively regulates kinase activity. Palmitoylated. Palmitoylation by ZDHHC4 prevents AKT1-mediated phosphorylation.

The protein localises to the cytoplasm. It is found in the nucleus. Its subcellular location is the cell membrane. It carries out the reaction L-seryl-[tau protein] + ATP = O-phospho-L-seryl-[tau protein] + ADP + H(+). It catalyses the reaction L-threonyl-[tau protein] + ATP = O-phospho-L-threonyl-[tau protein] + ADP + H(+). The enzyme catalyses L-seryl-[protein] + ATP = O-phospho-L-seryl-[protein] + ADP + H(+). The catalysed reaction is L-threonyl-[protein] + ATP = O-phospho-L-threonyl-[protein] + ADP + H(+). Activated by phosphorylation at Tyr-216. In response to insulin, inhibited by phosphorylation at Ser-9 by PKB/AKT1; phosphorylation at this site causes a conformational change, preventing access of substrates to the active site. Inhibited by IL22 treatment which also triggers phosphorylation at Ser-9, promoting inactivation. Inhibited by lithium. In terms of biological role, constitutively active protein kinase that acts as a negative regulator in the hormonal control of glucose homeostasis, Wnt signaling and regulation of transcription factors and microtubules, by phosphorylating and inactivating glycogen synthase (GYS1 or GYS2), EIF2B, CTNNB1/beta-catenin, APC, AXIN1, DPYSL2/CRMP2, JUN, NFATC1/NFATC, MAPT/TAU and MACF1. Requires primed phosphorylation of the majority of its substrates. In skeletal muscle, contributes to insulin regulation of glycogen synthesis by phosphorylating and inhibiting GYS1 activity and hence glycogen synthesis. May also mediate the development of insulin resistance by regulating activation of transcription factors. Regulates protein synthesis by controlling the activity of initiation factor 2B (EIF2BE/EIF2B5) in the same manner as glycogen synthase. In Wnt signaling, GSK3B forms a multimeric complex with APC, AXIN1 and CTNNB1/beta-catenin and phosphorylates the N-terminus of CTNNB1 leading to its degradation mediated by ubiquitin/proteasomes. Phosphorylates JUN at sites proximal to its DNA-binding domain, thereby reducing its affinity for DNA. Phosphorylates NFATC1/NFATC on conserved serine residues promoting NFATC1/NFATC nuclear export, shutting off NFATC1/NFATC gene regulation, and thereby opposing the action of calcineurin. Phosphorylates MAPT/TAU on 'Thr-548', decreasing significantly MAPT/TAU ability to bind and stabilize microtubules. MAPT/TAU is the principal component of neurofibrillary tangles in Alzheimer disease. Plays an important role in ERBB2-dependent stabilization of microtubules at the cell cortex. Phosphorylates MACF1, inhibiting its binding to microtubules which is critical for its role in bulge stem cell migration and skin wound repair. Probably regulates NF-kappa-B (NFKB1) at the transcriptional level and is required for the NF-kappa-B-mediated anti-apoptotic response to TNF-alpha (TNF/TNFA). Negatively regulates replication in pancreatic beta-cells, resulting in apoptosis, loss of beta-cells and diabetes. Through phosphorylation of the anti-apoptotic protein MCL1, may control cell apoptosis in response to growth factors deprivation. Phosphorylates MUC1 in breast cancer cells, decreasing the interaction of MUC1 with CTNNB1/beta-catenin. Is necessary for the establishment of neuronal polarity and axon outgrowth. Phosphorylates MARK2, leading to inhibition of its activity. Phosphorylates SIK1 at 'Thr-182', leading to sustainment of its activity. Phosphorylates ZC3HAV1 which enhances its antiviral activity. Phosphorylates SNAI1, leading to its ubiquitination and proteasomal degradation. Phosphorylates SFPQ at 'Thr-687' upon T-cell activation. Phosphorylates NR1D1 st 'Ser-55' and 'Ser-59' and stabilizes it by protecting it from proteasomal degradation. Regulates the circadian clock via phosphorylation of the major clock components including BMAL1, CLOCK and PER2. Phosphorylates CLOCK AT 'Ser-427' and targets it for proteasomal degradation. Phosphorylates BMAL1 at 'Ser-17' and 'Ser-21' and primes it for ubiquitination and proteasomal degradation. Phosphorylates FBXL2 at 'Thr-404' and primes it for ubiquitination by the SCF(FBXO3) complex and proteasomal degradation. Phosphorylates OGT at 'Ser-3' or 'Ser-4' which positively regulates its activity. Phosphorylates MYCN in neuroblastoma cells which may promote its degradation. Regulates the circadian rhythmicity of hippocampal long-term potentiation and BMAL1 and PER2 expression. Acts as a regulator of autophagy by mediating phosphorylation of KAT5/TIP60 under starvation conditions, activating KAT5/TIP60 acetyltransferase activity and promoting acetylation of key autophagy regulators, such as ULK1 and RUBCNL/Pacer. Negatively regulates extrinsic apoptotic signaling pathway via death domain receptors. Promotes the formation of an anti-apoptotic complex, made of DDX3X, BRIC2 and GSK3B, at death receptors, including TNFRSF10B. The anti-apoptotic function is most effective with weak apoptotic signals and can be overcome by stronger stimulation. Phosphorylates E2F1, promoting the interaction between E2F1 and USP11, stabilizing E2F1 and promoting its activity. Phosphorylates mTORC2 complex component RICTOR at 'Ser-1235' in response to endoplasmic stress, inhibiting mTORC2. Phosphorylates FXR1, promoting FXR1 ubiquitination by the SCF(FBXO4) complex and FXR1 degradation by the proteasome. Phosphorylates interleukin-22 receptor subunit IL22RA1, preventing its proteasomal degradation. This is Glycogen synthase kinase-3 beta from Spermophilus citellus (European ground squirrel).